A 1434-amino-acid polypeptide reads, in one-letter code: Probable ATP-dependent RNA helicase spindle-E (1434 aa).

The tract at residues 66–86 is disordered; it reads VGGPSNTKRTKTLDELESDDD. The Helicase ATP-binding domain maps to 127–294; that stretch reads MKAIKENPVV…FASCKSMPPV (168 aa). 140–147 provides a ligand contact to ATP; the sequence is GETGCGKT. The DEAH box signature appears at 240–243; the sequence is DEVH. Residues 354–526 enclose the Helicase C-terminal domain; the sequence is QSEQSYEEAK…SSVLKAKELD (173 aa). The region spanning 938 to 1001 is the Tudor domain; the sequence is ASAITKGLQL…RLMRHELRRD (64 aa).

This sequence belongs to the DEAD box helicase family. DEAH subfamily.

Its subcellular location is the cytoplasm. The enzyme catalyses ATP + H2O = ADP + phosphate + H(+). Probable ATP-binding RNA helicase which plays a central role during spermatogenesis and oogenesis by repressing transposable elements and preventing their mobilization, which is essential for the germline integrity. Acts via the piRNA metabolic process, which mediates the repression of transposable elements during meiosis by forming complexes composed of piRNAs and Piwi and govern the methylation and subsequent repression of transposons. Involved in the repression of LTR retrotransposon copia. Also involved in telomere regulation by repressing specialized telomeric retroelements HeT-A, TAHRE, and TART; Drosophila telomeres being maintained by transposition of specialized telomeric retroelements. Involved in telomeric trans-silencing, a repression mechanism by which a transposon or a transgene inserted in subtelomeric heterochromatin has the capacity to repress in trans in the female germline, a homologous transposon, or transgene located in euchromatin. Involved in the repression of testis-expressed Stellate genes by the homologous Su(Ste) repeats. Required for anteroposterior and dorsoventral axis formation during oogenesis. In Drosophila grimshawi (Hawaiian fruit fly), this protein is Probable ATP-dependent RNA helicase spindle-E (spn-E).